Reading from the N-terminus, the 380-residue chain is High affinity transport system protein p37 (380 aa).

Residues 1–26 (MLKRKKLLQGFLKFLPLIIPATIFVS) form the signal peptide. Cys27 carries N-palmitoyl cysteine lipidation. The S-diacylglycerol cysteine moiety is linked to residue Cys27. The segment at 285-304 (NHFYTPTENNGKGDSEKSNN) is disordered.

The protein localises to the cell membrane. P37 is part of a high-affinity transport system. The protein is High affinity transport system protein p37 (p37) of Mycoplasma pneumoniae (strain ATCC 29342 / M129 / Subtype 1) (Mycoplasmoides pneumoniae).